The chain runs to 663 residues: DNA ligase (663 aa).

NAD(+) is bound by residues 33–37 (DYSYD), 82–83 (SI), and Glu-112. Lys-114 functions as the N6-AMP-lysine intermediate in the catalytic mechanism. The NAD(+) site is built by Arg-135, Glu-171, Lys-285, and Lys-309. 4 residues coordinate Zn(2+): Cys-403, Cys-406, Cys-419, and Cys-424. A BRCT domain is found at 581–663 (DKEAPLQGKV…LRILDAKSVS (83 aa)).

It belongs to the NAD-dependent DNA ligase family. LigA subfamily. It depends on Mg(2+) as a cofactor. Requires Mn(2+) as cofactor.

The catalysed reaction is NAD(+) + (deoxyribonucleotide)n-3'-hydroxyl + 5'-phospho-(deoxyribonucleotide)m = (deoxyribonucleotide)n+m + AMP + beta-nicotinamide D-nucleotide.. Functionally, DNA ligase that catalyzes the formation of phosphodiester linkages between 5'-phosphoryl and 3'-hydroxyl groups in double-stranded DNA using NAD as a coenzyme and as the energy source for the reaction. It is essential for DNA replication and repair of damaged DNA. In Chlamydia trachomatis serovar D (strain ATCC VR-885 / DSM 19411 / UW-3/Cx), this protein is DNA ligase.